We begin with the raw amino-acid sequence, 259 residues long: Phosphatidylglycerol--prolipoprotein diacylglyceryl transferase (259 aa).

The next 4 membrane-spanning stretches (helical) occupy residues 12–32 (LAIH…VYLA), 41–61 (ISSD…IVGA), 80–100 (IIAI…GALV), and 109–129 (VLNP…AQAI). Arg131 lines the a 1,2-diacyl-sn-glycero-3-phospho-(1'-sn-glycerol) pocket. 3 consecutive transmembrane segments (helical) span residues 167–187 (IPTF…IMMW), 194–214 (LLDG…RLVI), and 226–246 (GIRI…IFVI).

This sequence belongs to the Lgt family.

It is found in the cell membrane. The enzyme catalyses L-cysteinyl-[prolipoprotein] + a 1,2-diacyl-sn-glycero-3-phospho-(1'-sn-glycerol) = an S-1,2-diacyl-sn-glyceryl-L-cysteinyl-[prolipoprotein] + sn-glycerol 1-phosphate + H(+). It functions in the pathway protein modification; lipoprotein biosynthesis (diacylglyceryl transfer). In terms of biological role, catalyzes the transfer of the diacylglyceryl group from phosphatidylglycerol to the sulfhydryl group of the N-terminal cysteine of a prolipoprotein, the first step in the formation of mature lipoproteins. In Streptococcus pyogenes serotype M3 (strain ATCC BAA-595 / MGAS315), this protein is Phosphatidylglycerol--prolipoprotein diacylglyceryl transferase.